Here is a 149-residue protein sequence, read N- to C-terminus: NPC intracellular cholesterol transporter 2 (149 aa).

The first 19 residues, 1–19, serve as a signal peptide directing secretion; it reads MHFLAAAFLLLTLSASALA. 3 cysteine pairs are disulfide-bonded: C27/C140, C42/C47, and C93/C99. N-linked (GlcNAc...) asparagine glycosylation is present at N58. Residue K116 is modified to N6-acetyllysine.

It belongs to the NPC2 family. In terms of assembly, interacts with NPC1 (via the second lumenal domain) in a cholestrol-dependent manner. Interacts with NUS1/NgBR, the interaction stabilizes NCP2 and regulates cholesterol trafficking. Interacts with DHDDS. Interacts with NEDD4L (via C2 domain). Interacts with NPC1L1. N-glycosylated. Found in the epididymal fluid as a 19 kDa glycoprotein that is processed during its passage through the epididymis into a 16 kDa protein. Found in the fluid from the distal caput to cauda epididymis, not detected in the rete testis and the proximal and middle caput epididymal fluids (at protein level).

It localises to the secreted. Its subcellular location is the endoplasmic reticulum. The protein resides in the lysosome. The catalysed reaction is cholesterol(in) = cholesterol(out). Its function is as follows. Intracellular cholesterol transporter which acts in concert with NPC1 and plays an important role in the egress of cholesterol from the lysosomal compartment. Unesterified cholesterol that has been released from LDLs in the lumen of the late endosomes/lysosomes is transferred by NPC2 to the cholesterol-binding pocket in the N-terminal domain of NPC1. May bind and mobilize cholesterol that is associated with membranes. NPC2 binds cholesterol with a 1:1 stoichiometry. Can bind a variety of sterols, including lathosterol, desmosterol and the plant sterols stigmasterol and beta-sitosterol. The secreted form of NCP2 regulates biliary cholesterol secretion via stimulation of ABCG5/ABCG8-mediated cholesterol transport. The sequence is that of NPC intracellular cholesterol transporter 2 from Sus scrofa (Pig).